A 340-amino-acid chain; its full sequence is MLSLSKNWNTLIKPNKVAYENFPETNNKAKIVVEPLERGFGLTLGNAMRRVLLSSLQGAAITSIKIPAIEHEFSSIPGVKEDVSEVILNIKGIEVKMHVAEKRIMKLKATGPCVVTAGMIETGHDVEILNPDHVICDLAKDKQLEMELTCKVGKGYVLSTNNYEDNLPIGEIAIDALFNPVKSVTYKVENTRVGQVTDYDKLIMFVETNGAVLPEMAVGLAARILQEQLQLFISFEEQEEDKQVKTDALPFSPYLLKRVDELELSVRSANCLKNDNIIYIGDLVKRTEADMLRTPNFGRKSLNEIKEILAKFNLRFGMDVPDWPPENMQELSKRYEDSYN.

The segment at 1–236 (MLSLSKNWNT…EQLQLFISFE (236 aa)) is alpha N-terminal domain (alpha-NTD). The tract at residues 251–340 (FSPYLLKRVD…LSKRYEDSYN (90 aa)) is alpha C-terminal domain (alpha-CTD).

This sequence belongs to the RNA polymerase alpha chain family. As to quaternary structure, homodimer. The RNAP catalytic core consists of 2 alpha, 1 beta, 1 beta' and 1 omega subunit. When a sigma factor is associated with the core the holoenzyme is formed, which can initiate transcription.

It catalyses the reaction RNA(n) + a ribonucleoside 5'-triphosphate = RNA(n+1) + diphosphate. DNA-dependent RNA polymerase catalyzes the transcription of DNA into RNA using the four ribonucleoside triphosphates as substrates. This is DNA-directed RNA polymerase subunit alpha from Rickettsia rickettsii (strain Iowa).